The following is a 195-amino-acid chain: Imidazoleglycerol-phosphate dehydratase (195 aa).

Belongs to the imidazoleglycerol-phosphate dehydratase family.

Its subcellular location is the cytoplasm. The enzyme catalyses D-erythro-1-(imidazol-4-yl)glycerol 3-phosphate = 3-(imidazol-4-yl)-2-oxopropyl phosphate + H2O. It participates in amino-acid biosynthesis; L-histidine biosynthesis; L-histidine from 5-phospho-alpha-D-ribose 1-diphosphate: step 6/9. This chain is Imidazoleglycerol-phosphate dehydratase, found in Hydrogenovibrio crunogenus (strain DSM 25203 / XCL-2) (Thiomicrospira crunogena).